The chain runs to 120 residues: Holo-[acyl-carrier-protein] synthase (120 aa).

Mg(2+)-binding residues include D8 and E58.

It belongs to the P-Pant transferase superfamily. AcpS family. Mg(2+) is required as a cofactor.

The protein localises to the cytoplasm. The enzyme catalyses apo-[ACP] + CoA = holo-[ACP] + adenosine 3',5'-bisphosphate + H(+). Transfers the 4'-phosphopantetheine moiety from coenzyme A to a Ser of acyl-carrier-protein. The polypeptide is Holo-[acyl-carrier-protein] synthase (Limosilactobacillus reuteri (strain DSM 20016) (Lactobacillus reuteri)).